The sequence spans 60 residues: Small ribosomal subunit protein bS21 (60 aa).

Belongs to the bacterial ribosomal protein bS21 family.

The chain is Small ribosomal subunit protein bS21 (rpsU) from Mycoplasma pneumoniae (strain ATCC 29342 / M129 / Subtype 1) (Mycoplasmoides pneumoniae).